The sequence spans 65 residues: MAVPKRRHSKSRTRKRRSTYYNELEPPQLMECNNCGNPKVMHRACKHCGHYRGRQVIEPSDELIA.

The segment covering M1–S18 has biased composition (basic residues). The segment at M1 to Y20 is disordered.

The protein belongs to the bacterial ribosomal protein bL32 family.

The sequence is that of Large ribosomal subunit protein bL32 from Salinibacter ruber (strain DSM 13855 / M31).